A 177-amino-acid chain; its full sequence is Large ribosomal subunit protein uL6 (177 aa).

This sequence belongs to the universal ribosomal protein uL6 family. Part of the 50S ribosomal subunit.

Functionally, this protein binds to the 23S rRNA, and is important in its secondary structure. It is located near the subunit interface in the base of the L7/L12 stalk, and near the tRNA binding site of the peptidyltransferase center. The polypeptide is Large ribosomal subunit protein uL6 (Salmonella newport (strain SL254)).